Consider the following 116-residue polypeptide: Aspartate 1-decarboxylase (116 aa).

Catalysis depends on Ser25, which acts as the Schiff-base intermediate with substrate; via pyruvic acid. Residue Ser25 is modified to Pyruvic acid (Ser). Position 57 (Thr57) interacts with substrate. Tyr58 (proton donor) is an active-site residue. 73 to 75 (GAA) contacts substrate.

This sequence belongs to the PanD family. As to quaternary structure, heterooctamer of four alpha and four beta subunits. The cofactor is pyruvate. Is synthesized initially as an inactive proenzyme, which is activated by self-cleavage at a specific serine bond to produce a beta-subunit with a hydroxyl group at its C-terminus and an alpha-subunit with a pyruvoyl group at its N-terminus.

It is found in the cytoplasm. It catalyses the reaction L-aspartate + H(+) = beta-alanine + CO2. The protein operates within cofactor biosynthesis; (R)-pantothenate biosynthesis; beta-alanine from L-aspartate: step 1/1. Functionally, catalyzes the pyruvoyl-dependent decarboxylation of aspartate to produce beta-alanine. This is Aspartate 1-decarboxylase from Phocaeicola vulgatus (strain ATCC 8482 / DSM 1447 / JCM 5826 / CCUG 4940 / NBRC 14291 / NCTC 11154) (Bacteroides vulgatus).